The primary structure comprises 479 residues: Transcription factor CP2-like protein 1 (479 aa).

Residues 1–52 (MLFWHTQPEHYNQHNSGSYLRDVLALPIFKQEEPQLSPENGARLPPLQYVLC) form a mediate transcriptional repression region. Residues 43-280 (RLPPLQYVLC…PSPSYNGSPN (238 aa)) form the Grh/CP2 DB domain. 2 disordered regions span residues 219–248 (KPKG…YQPS) and 260–301 (WPDV…LPLG). The span at 221–245 (KGADRKQKTDREKMEKRTAQEKEKY) shows a compositional bias: basic and acidic residues. The tract at residues 261 to 365 (PDVPYQANNT…IRLFNAIKGR (105 aa)) is SAM2-like domain. Polar residues predominate over residues 266–292 (QANNTPSPSYNGSPNSFGLREGNSSPN).

The protein belongs to the grh/CP2 family. CP2 subfamily. Forms homohexamers via its SAM-like domain. Interacts with Mta1; which is indispensable for Tfcp2l1-mediated self-renewal-promoting effect and endoderm-inhibiting action. In terms of tissue distribution, highly expressed in placenta, testis, small intestine, kidney and stomach. Low levels of expression in lung, mesenteric lymph nodes, muscle, ovary, and thymus. No expression was detected in brain, heart, liver, and spleen. Expressed in eccrine glands in the palm. Expression is prominent in both kidney collecting ducts intercalated (IC) and principal (PC) cells. Also expressed in the thick limb of Henle and connecting segments of the nephron.

The protein resides in the nucleus. In terms of biological role, transcription factor that facilitates establishment and maintenance of pluripotency in embryonic stem cells (ESCs). With Klf2, acts as the major effector of self-renewal that mediates induction of pluripotency downstream of LIF/Stat3 and Wnt/beta-catenin signaling. Required for normal duct development in the salivary gland and kidney. Coordinates the development of the kidney collecting ducts intercalated (IC) and principal (PC) cells, which regulate acid-base and salt-water homeostasis, respectively. Regulates the expression of IC genes including subunits B1 and D2 of the V-ATPase complex, Oxgr1, Ca12, Slc4a1, Aqp6 and IC-specific transcription factor Foxi1. Also regulates the expression of Jag1 and subsequent notch signaling in the collecting duct. Jag1 initiates notch signaling in PCs but inhibits notch signaling in ICs. Acts as a transcriptional suppressor that may suppress UBP1-mediated transcriptional activation. Modulates the placental expression of CYP11A1. The protein is Transcription factor CP2-like protein 1 (Tfcp2l1) of Mus musculus (Mouse).